A 148-amino-acid polypeptide reads, in one-letter code: Sperm-specific protein PHI-2B (148 aa).

Residues 1 to 35 are compositionally biased toward basic residues; the sequence is PSPSRRSRSRSRSRSKSPKRSPAKKARKTPKKRRA. Disordered regions lie at residues 1–44 and 97–148; these read PSPS…KPST and GVLV…KSNN. The H15 domain maps to 40-119; that stretch reads KKPSTLSMIV…GATGSFRVGK (80 aa). Residues 124 to 148 show a composition bias toward basic residues; that stretch reads PKKKAKKAKSPKKKSSKKSSNKSNN.

It belongs to the histone H1/H5 family. As to expression, sperm.

Its subcellular location is the nucleus. It is found in the chromosome. Functionally, linker histones are implicated in chromatin remodeling and/or transcriptional regulation during spermiogenesis, the process of spermatid maturation into spermatozoa. This chain is Sperm-specific protein PHI-2B, found in Mytilus californianus (California mussel).